A 421-amino-acid polypeptide reads, in one-letter code: Uracil permease (421 aa).

Transmembrane regions (helical) follow at residues Ile-18–Leu-38, Ile-41–Cys-61, Ile-65–Thr-85, Glu-89–Val-109, Gly-115–Leu-135, Pro-160–Phe-180, Ile-186–Val-206, Ile-232–Val-252, Val-304–Gly-324, Leu-329–Ile-349, Ile-371–Phe-391, and Met-393–Ile-413.

Belongs to the nucleobase:cation symporter-2 (NCS2) (TC 2.A.40) family.

The protein resides in the cell membrane. Inhibited by the proton gradient disruptor carbonyl cyanide m-chlorophenylhydrazone (CCCP), but not by the sodium gradient disruptor ouabain. Both xanthine and uric acid act as competitive inhibitors of uracil transport. Functionally, specific for the uptake of uracil. Transport is probably proton-dependent. This chain is Uracil permease, found in Paenibacillus larvae subsp. larvae (strain NRRL B-3650 / LMG 16245).